The primary structure comprises 163 residues: Nucleotide-binding protein DvMF_3058 (163 aa).

The protein belongs to the YajQ family.

Functionally, nucleotide-binding protein. This Nitratidesulfovibrio vulgaris (strain DSM 19637 / Miyazaki F) (Desulfovibrio vulgaris) protein is Nucleotide-binding protein DvMF_3058.